Consider the following 292-residue polypeptide: ATP synthase gamma chain (292 aa).

This sequence belongs to the ATPase gamma chain family. F-type ATPases have 2 components, CF(1) - the catalytic core - and CF(0) - the membrane proton channel. CF(1) has five subunits: alpha(3), beta(3), gamma(1), delta(1), epsilon(1). CF(0) has three main subunits: a, b and c.

The protein localises to the cell inner membrane. Functionally, produces ATP from ADP in the presence of a proton gradient across the membrane. The gamma chain is believed to be important in regulating ATPase activity and the flow of protons through the CF(0) complex. In Magnetococcus marinus (strain ATCC BAA-1437 / JCM 17883 / MC-1), this protein is ATP synthase gamma chain.